The chain runs to 625 residues: DNA mismatch repair protein MutL (625 aa).

The protein belongs to the DNA mismatch repair MutL/HexB family.

This protein is involved in the repair of mismatches in DNA. It is required for dam-dependent methyl-directed DNA mismatch repair. May act as a 'molecular matchmaker', a protein that promotes the formation of a stable complex between two or more DNA-binding proteins in an ATP-dependent manner without itself being part of a final effector complex. The sequence is that of DNA mismatch repair protein MutL from Bacteroides fragilis (strain YCH46).